Here is a 510-residue protein sequence, read N- to C-terminus: Cytochrome P450 monooxygenase BOT1 (510 aa).

Residues Pro16–Val36 form a helical membrane-spanning segment. Cys454 contributes to the heme binding site. N-linked (GlcNAc...) asparagine glycosylation occurs at Asn476.

This sequence belongs to the cytochrome P450 family. Heme is required as a cofactor.

The protein resides in the membrane. It functions in the pathway secondary metabolite biosynthesis. In terms of biological role, cytochrome P450 monooxygenase; part of the gene cluster that mediates the biosynthesis of botrydial. Botrydial is necessary for colonization of plant tissue by the T4 strain. It is a strain-dependent virulence factor since highly aggressive strains like SAS56 or B05 still retain substantial virulence when botrydial synthesis is impaired, since they produce also botcinic acid. The first step of botrydial biosynthesis is performed by the sesquiterpene synthase BOT2 which catalyzes the cyclization of farnesyl diphosphate (FPP) to presilphiperfolan-8-beta-ol (PSP). The cytochrome P450 monooxygenase BOT4 then catalyzes the hydroxylation at C-4 to give a probotryane intermediate. Acetylation of the hydroxyl at C-4 is carried out by the acetyltransferase BOT5, followed by the combined action of the P450 monooxygenases BOT3 and BOT1, to yield finally the glycol, via the regio- and stereospecific hydroxylations at C-10 and C-15 of the probotryane intermediates, respectively. The cleavage of the C10-C15 bond of probotryane skeleton is an intriguing and chemically important reaction, which could be mediated by some of the monooxygenases or by a combination of them. It is possible that either BOT3 or BOT1 would oxidize either the 10- or the 15-hydroxy group to the hydroperoxide derivative, which would then undergo heterolytic fragmentation to give the dialdehyde botrydial. Finally, the dehydrogenase BOT7 might be involved in the conversion of botrydial to dihydrobotrydial. The polypeptide is Cytochrome P450 monooxygenase BOT1 (Botryotinia fuckeliana (Noble rot fungus)).